Here is a 338-residue protein sequence, read N- to C-terminus: MTRF1L release factor glutamine methyltransferase (338 aa).

S-adenosyl-L-methionine contacts are provided by residues 167–171, D190, W225, and N239; that span reads GCGSG. 239 to 242 contacts substrate; that stretch reads NPPY.

This sequence belongs to the protein N5-glutamine methyltransferase family.

The protein resides in the mitochondrion. It carries out the reaction L-glutaminyl-[peptide chain release factor] + S-adenosyl-L-methionine = N(5)-methyl-L-glutaminyl-[peptide chain release factor] + S-adenosyl-L-homocysteine + H(+). Its function is as follows. N5-glutamine methyltransferase responsible for the methylation of the glutamine residue in the universally conserved GGQ motif of the mitochondrial translation release factors MTRF1, MTRF1L, MRPL58/ICT1 and MTRFR. The protein is MTRF1L release factor glutamine methyltransferase (HEMK1) of Homo sapiens (Human).